We begin with the raw amino-acid sequence, 1212 residues long: Nucleolar protein 6 (1212 aa).

Disordered regions lie at residues 1–72 (MGKI…PVSI) and 1156–1212 (KREQ…KSLS). A compositionally biased stretch (basic residues) spans 1197 to 1212 (LKRKSLIKSRPLKSLS).

The protein belongs to the NRAP family. As to quaternary structure, part of the small subunit (SSU) processome, composed of more than 70 proteins and the RNA chaperone small nucleolar RNA (snoRNA) U3.

Its subcellular location is the nucleus. The protein localises to the nucleolus. The protein resides in the chromosome. Part of the small subunit (SSU) processome, first precursor of the small eukaryotic ribosomal subunit. During the assembly of the SSU processome in the nucleolus, many ribosome biogenesis factors, an RNA chaperone and ribosomal proteins associate with the nascent pre-rRNA and work in concert to generate RNA folding, modifications, rearrangements and cleavage as well as targeted degradation of pre-ribosomal RNA by the RNA exosome. The polypeptide is Nucleolar protein 6 (Drosophila pseudoobscura pseudoobscura (Fruit fly)).